The primary structure comprises 263 residues: Isoprenyl transferase (263 aa).

Residue aspartate 26 is part of the active site. Aspartate 26 provides a ligand contact to Mg(2+). Substrate contacts are provided by residues 27–30 (GNGR), tryptophan 31, arginine 39, histidine 43, and 71–73 (SSE). The active-site Proton acceptor is asparagine 74. Residues tryptophan 75, arginine 77, arginine 191, and 197-199 (RIS) contribute to the substrate site. Glutamate 210 is a Mg(2+) binding site. Residues 241 to 263 (GRTSEQIAGQQENKNTVSNEDRV) form a disordered region. A compositionally biased stretch (polar residues) spans 243 to 263 (TSEQIAGQQENKNTVSNEDRV).

This sequence belongs to the UPP synthase family. As to quaternary structure, homodimer. It depends on Mg(2+) as a cofactor.

In terms of biological role, catalyzes the condensation of isopentenyl diphosphate (IPP) with allylic pyrophosphates generating different type of terpenoids. This Nitrosomonas europaea (strain ATCC 19718 / CIP 103999 / KCTC 2705 / NBRC 14298) protein is Isoprenyl transferase.